A 244-amino-acid polypeptide reads, in one-letter code: 1-(5-phosphoribosyl)-5-[(5-phosphoribosylamino)methylideneamino] imidazole-4-carboxamide isomerase (244 aa).

The Proton acceptor role is filled by Asp8. The active-site Proton donor is the Asp129.

Belongs to the HisA/HisF family.

Its subcellular location is the cytoplasm. It carries out the reaction 1-(5-phospho-beta-D-ribosyl)-5-[(5-phospho-beta-D-ribosylamino)methylideneamino]imidazole-4-carboxamide = 5-[(5-phospho-1-deoxy-D-ribulos-1-ylimino)methylamino]-1-(5-phospho-beta-D-ribosyl)imidazole-4-carboxamide. It participates in amino-acid biosynthesis; L-histidine biosynthesis; L-histidine from 5-phospho-alpha-D-ribose 1-diphosphate: step 4/9. This chain is 1-(5-phosphoribosyl)-5-[(5-phosphoribosylamino)methylideneamino] imidazole-4-carboxamide isomerase, found in Thermodesulfovibrio yellowstonii (strain ATCC 51303 / DSM 11347 / YP87).